A 732-amino-acid polypeptide reads, in one-letter code: Polyribonucleotide nucleotidyltransferase (732 aa).

Mg(2+) contacts are provided by D483 and D489. The region spanning 550–609 (PRIVTVQIPVDKIGELIGPKGKNIRGIQDETGAELSVEDDGTVTIAAVGGDSMERAKQMV) is the KH domain. The S1 motif domain occupies 619–687 (GETYEGTVKT…ERGRLRLSMK (69 aa)). Residues 684–732 (LSMKALLPKPEGMPDEPPQSERPRRDDGERSGGDRGGRGGRNGGGRDRR) are disordered. The segment covering 702–720 (QSERPRRDDGERSGGDRGG) has biased composition (basic and acidic residues).

Belongs to the polyribonucleotide nucleotidyltransferase family. The cofactor is Mg(2+).

The protein localises to the cytoplasm. The enzyme catalyses RNA(n+1) + phosphate = RNA(n) + a ribonucleoside 5'-diphosphate. Functionally, involved in mRNA degradation. Catalyzes the phosphorolysis of single-stranded polyribonucleotides processively in the 3'- to 5'-direction. The chain is Polyribonucleotide nucleotidyltransferase from Gemmatimonas aurantiaca (strain DSM 14586 / JCM 11422 / NBRC 100505 / T-27).